The primary structure comprises 757 residues: Probable tRNA (uracil-O(2)-)-methyltransferase (757 aa).

2 disordered regions span residues 55-93 (EARG…GPEQ) and 108-138 (QQEE…GDFP). Residues 72 to 84 (PGPGQGSPGGGPG) are compositionally biased toward gly residues. Ser78 is modified (phosphoserine). Over residues 123–136 (DSGHPGHAEGREGD) the composition is skewed to basic and acidic residues. Ser533 bears the Phosphoserine mark. The segment at 713–743 (ACKTRLCWFFMHHPDGCALSTDCCPFAHGPA) adopts a C3H1-type zinc-finger fold.

Belongs to the TRM44 family.

It localises to the cytoplasm. It carries out the reaction uridine(44) in tRNA(Ser) + S-adenosyl-L-methionine = 2'-O-methyluridine(44) in tRNA(Ser) + S-adenosyl-L-homocysteine + H(+). Probable adenosyl-L-methionine (AdoMet)-dependent tRNA (uracil-O(2)-)-methyltransferase. The chain is Probable tRNA (uracil-O(2)-)-methyltransferase (TRMT44) from Homo sapiens (Human).